The sequence spans 67 residues: Sec-independent protein translocase protein TatA (67 aa).

A helical transmembrane segment spans residues M1–G21.

It belongs to the TatA/E family. The Tat system comprises two distinct complexes: a TatABC complex, containing multiple copies of TatA, TatB and TatC subunits, and a separate TatA complex, containing only TatA subunits. Substrates initially bind to the TatABC complex, which probably triggers association of the separate TatA complex to form the active translocon.

It localises to the cell inner membrane. Functionally, part of the twin-arginine translocation (Tat) system that transports large folded proteins containing a characteristic twin-arginine motif in their signal peptide across membranes. TatA could form the protein-conducting channel of the Tat system. The chain is Sec-independent protein translocase protein TatA from Ruthia magnifica subsp. Calyptogena magnifica.